The chain runs to 283 residues: Small ribosomal subunit protein uS3 (283 aa).

Residues 39–107 (VRAYLKTKLK…PVHVNIEEIR (69 aa)) enclose the KH type-2 domain. A disordered region spans residues 219 to 283 (ASDDDKKRRG…AAVSAEKAGE (65 aa)). A compositionally biased stretch (basic and acidic residues) spans 221–236 (DDDKKRRGPRRDDGKP). A compositionally biased stretch (low complexity) spans 237–260 (SGRPRAPRPEGQPGAAAPGSAPAA).

Belongs to the universal ribosomal protein uS3 family. Part of the 30S ribosomal subunit. Forms a tight complex with proteins S10 and S14.

In terms of biological role, binds the lower part of the 30S subunit head. Binds mRNA in the 70S ribosome, positioning it for translation. The sequence is that of Small ribosomal subunit protein uS3 from Janthinobacterium sp. (strain Marseille) (Minibacterium massiliensis).